A 159-amino-acid polypeptide reads, in one-letter code: Ribosomal RNA large subunit methyltransferase H (159 aa).

S-adenosyl-L-methionine is bound by residues L76, G108, and 127 to 132 (FSKMTF).

This sequence belongs to the RNA methyltransferase RlmH family. As to quaternary structure, homodimer.

Its subcellular location is the cytoplasm. The enzyme catalyses pseudouridine(1915) in 23S rRNA + S-adenosyl-L-methionine = N(3)-methylpseudouridine(1915) in 23S rRNA + S-adenosyl-L-homocysteine + H(+). Functionally, specifically methylates the pseudouridine at position 1915 (m3Psi1915) in 23S rRNA. The polypeptide is Ribosomal RNA large subunit methyltransferase H (Bifidobacterium longum (strain DJO10A)).